The sequence spans 400 residues: Putative cytochrome P450 141 (400 aa).

The next 2 helical transmembrane spans lie at 225 to 245 (VVGM…AVIT) and 294 to 314 (VVIA…ITSA). C346 lines the heme pocket.

Belongs to the cytochrome P450 family. Heme serves as cofactor.

It localises to the cell membrane. This is Putative cytochrome P450 141 (cyp141) from Mycobacterium tuberculosis (strain CDC 1551 / Oshkosh).